The primary structure comprises 270 residues: Dermonecrotic toxin LhSicTox-alphaIA2aiii (270 aa).

His2 is a catalytic residue. Positions 22 and 24 each coordinate Mg(2+). His38 functions as the Nucleophile in the catalytic mechanism. 2 disulfide bridges follow: Cys42–Cys48 and Cys44–Cys187. A Mg(2+)-binding site is contributed by Asp82.

The protein belongs to the arthropod phospholipase D family. Class II subfamily. Mg(2+) is required as a cofactor. In terms of tissue distribution, expressed by the venom gland.

It localises to the secreted. The enzyme catalyses an N-(acyl)-sphingosylphosphocholine = an N-(acyl)-sphingosyl-1,3-cyclic phosphate + choline. It catalyses the reaction an N-(acyl)-sphingosylphosphoethanolamine = an N-(acyl)-sphingosyl-1,3-cyclic phosphate + ethanolamine. It carries out the reaction a 1-acyl-sn-glycero-3-phosphocholine = a 1-acyl-sn-glycero-2,3-cyclic phosphate + choline. The catalysed reaction is a 1-acyl-sn-glycero-3-phosphoethanolamine = a 1-acyl-sn-glycero-2,3-cyclic phosphate + ethanolamine. Its function is as follows. Dermonecrotic toxins cleave the phosphodiester linkage between the phosphate and headgroup of certain phospholipids (sphingolipid and lysolipid substrates), forming an alcohol (often choline) and a cyclic phosphate. This toxin acts on sphingomyelin (SM). It may also act on ceramide phosphoethanolamine (CPE), lysophosphatidylcholine (LPC) and lysophosphatidylethanolamine (LPE), but not on lysophosphatidylserine (LPS), and lysophosphatidylglycerol (LPG). It acts by transphosphatidylation, releasing exclusively cyclic phosphate products as second products. Induces dermonecrosis, hemolysis, increased vascular permeability, edema, inflammatory response, and platelet aggregation. The chain is Dermonecrotic toxin LhSicTox-alphaIA2aiii from Loxosceles hirsuta (Recluse spider).